The chain runs to 125 residues: Fluoride-specific ion channel FluC (125 aa).

4 consecutive transmembrane segments (helical) span residues 5–25 (ILAI…LALW), 37–57 (LAAN…FHLL), 71–91 (GFLG…TMLL), and 97–117 (VALL…WLGI). The Na(+) site is built by Gly-74 and Thr-77.

The protein belongs to the fluoride channel Fluc/FEX (TC 1.A.43) family.

The protein localises to the cell inner membrane. The catalysed reaction is fluoride(in) = fluoride(out). Na(+) is not transported, but it plays an essential structural role and its presence is essential for fluoride channel function. Fluoride-specific ion channel. Important for reducing fluoride concentration in the cell, thus reducing its toxicity. This Variovorax paradoxus (strain S110) protein is Fluoride-specific ion channel FluC.